The following is a 456-amino-acid chain: Alcohol acyl transferase 1 allele GSc (456 aa).

Residues His-165 and Asn-386 each act as proton acceptor in the active site.

This sequence belongs to the plant acyltransferase family. In terms of tissue distribution, expressed at very low levels in the skin of ripe fruit.

Functionally, involved in the biosynthesis of volatile esters which confer ripe apple fruit flavor. Alcohol acyl transferase that can use a wide range of alcohols as substrate to produce esters. The chain is Alcohol acyl transferase 1 allele GSc from Malus domestica (Apple).